The primary structure comprises 166 residues: NADH-quinone oxidoreductase subunit I (166 aa).

4Fe-4S ferredoxin-type domains lie at 57-87 (LRRY…IESE) and 97-126 (TRYD…VTPI). C67, C70, C73, C77, C106, C109, C112, and C116 together coordinate [4Fe-4S] cluster.

This sequence belongs to the complex I 23 kDa subunit family. In terms of assembly, NDH-1 is composed of 14 different subunits. Subunits NuoA, H, J, K, L, M, N constitute the membrane sector of the complex. [4Fe-4S] cluster serves as cofactor.

Its subcellular location is the cell inner membrane. The enzyme catalyses a quinone + NADH + 5 H(+)(in) = a quinol + NAD(+) + 4 H(+)(out). In terms of biological role, NDH-1 shuttles electrons from NADH, via FMN and iron-sulfur (Fe-S) centers, to quinones in the respiratory chain. The immediate electron acceptor for the enzyme in this species is believed to be ubiquinone. Couples the redox reaction to proton translocation (for every two electrons transferred, four hydrogen ions are translocated across the cytoplasmic membrane), and thus conserves the redox energy in a proton gradient. This Legionella pneumophila (strain Paris) protein is NADH-quinone oxidoreductase subunit I.